A 258-amino-acid polypeptide reads, in one-letter code: Thiazole synthase (258 aa).

Residue K96 is the Schiff-base intermediate with DXP of the active site. 1-deoxy-D-xylulose 5-phosphate-binding positions include G157, 183 to 184, and 205 to 206; these read AG and NT.

This sequence belongs to the ThiG family. Homotetramer. Forms heterodimers with either ThiH or ThiS.

Its subcellular location is the cytoplasm. It carries out the reaction [ThiS sulfur-carrier protein]-C-terminal-Gly-aminoethanethioate + 2-iminoacetate + 1-deoxy-D-xylulose 5-phosphate = [ThiS sulfur-carrier protein]-C-terminal Gly-Gly + 2-[(2R,5Z)-2-carboxy-4-methylthiazol-5(2H)-ylidene]ethyl phosphate + 2 H2O + H(+). The protein operates within cofactor biosynthesis; thiamine diphosphate biosynthesis. In terms of biological role, catalyzes the rearrangement of 1-deoxy-D-xylulose 5-phosphate (DXP) to produce the thiazole phosphate moiety of thiamine. Sulfur is provided by the thiocarboxylate moiety of the carrier protein ThiS. In vitro, sulfur can be provided by H(2)S. The chain is Thiazole synthase from Alkaliphilus metalliredigens (strain QYMF).